The primary structure comprises 339 residues: Heat-inducible transcription repressor HrcA (339 aa).

Belongs to the HrcA family.

In terms of biological role, negative regulator of class I heat shock genes (grpE-dnaK-dnaJ and groELS operons). Prevents heat-shock induction of these operons. In Nitrosospira multiformis (strain ATCC 25196 / NCIMB 11849 / C 71), this protein is Heat-inducible transcription repressor HrcA.